Here is a 246-residue protein sequence, read N- to C-terminus: Breast cancer metastasis-suppressor 1 (246 aa).

Residues 1–57 are disordered; that stretch reads MPVQPPSKDTEEMEAEGDSAAEMNGEEEESEEERSGSQTESEEESSEMDDEDYERRR. 2 stretches are compositionally biased toward acidic residues: residues 11–32 and 40–52; these read EEME…ESEE and ESEE…DDED. Residues 51–98 are a coiled coil; sequence EDYERRRSECVSEMLDLEKQFSELKEKLFRERLSQLRLRLEEVGAERA. Glycyl lysine isopeptide (Lys-Gly) (interchain with G-Cter in SUMO2) cross-links involve residues lysine 184 and lysine 242.

It belongs to the BRMS1 family. Homohexamer (Potential). Interacts with SNX6, HDAC1 and RELA. Interacts with ARID4A. Identified in mSin3A corepressor complexes together with SIN3A, SIN3B, RBBP4, RBBP7, SAP30, SUDS3, ARID4A, HDAC1 and HDAC2. Interacts with SPOP; this recruits the protein to a ubiquitin ligase complex containing SPOP and CUL3. In terms of processing, ubiquitinated by a cullin-RING-based BCR (BTB-CUL3-RBX1) E3 ubiquitin-protein ligase complex containing SPOP, leading to proteasomal degradation. As to expression, expression levels are higher in term placentas than in early placentas. Low levels of expression observed in normal pregnancies and in molar pregnancies.

Its subcellular location is the nucleus. It is found in the cytoplasm. Functionally, transcriptional repressor. Down-regulates transcription activation by NF-kappa-B by promoting the deacetylation of RELA at 'Lys-310'. Promotes HDAC1 binding to promoter regions. Down-regulates expression of anti-apoptotic genes that are controlled by NF-kappa-B. Promotes apoptosis in cells that have inadequate adherence to a substrate, a process called anoikis, and may thereby inhibit metastasis. May be a mediator of metastasis suppression in breast carcinoma. This Homo sapiens (Human) protein is Breast cancer metastasis-suppressor 1 (BRMS1).